A 20-amino-acid polypeptide reads, in one-letter code: Zinc metalloproteinase-disintegrin-like uracoina-1 (20 aa).

The protein belongs to the venom metalloproteinase (M12B) family. P-III subfamily. In terms of assembly, monomer. Zn(2+) serves as cofactor. Expressed by the venom gland.

It is found in the secreted. Its activity is regulated as follows. Inhibited by ethylenediaminetetraacetic acid (EDTA) and 1,10-phenanthroline. Not inhibited by tosyl-L-lysine chloromethyl ketone (TCLK) and phenylmethanesulfonylfluoride (PMSF). Snake venom zinc metalloprotease that possesses hemorrhagic activity (minimum hemorrhagic dose, MHD=4.7 ug) when injected intradermally into mice. Degrades the alpha-chain of fibrinogen (FGA). This is Zinc metalloproteinase-disintegrin-like uracoina-1 from Crotalus vegrandis (Uracoan rattlesnake).